We begin with the raw amino-acid sequence, 250 residues long: Putative B3 domain-containing protein At4g03170 (250 aa).

A compositionally biased stretch (polar residues) spans Met-1 to Thr-12. The disordered stretch occupies residues Met-1–Lys-90. Residues Asp-34 to Glu-56 show a composition bias toward acidic residues. Over residues Gln-72 to Gln-84 the composition is skewed to basic and acidic residues. The segment at residues Lys-137 to Lys-245 is a DNA-binding region (TF-B3).

The protein resides in the nucleus. In Arabidopsis thaliana (Mouse-ear cress), this protein is Putative B3 domain-containing protein At4g03170.